The primary structure comprises 191 residues: dTTP/UTP pyrophosphatase (191 aa).

Asp-75 serves as the catalytic Proton acceptor.

This sequence belongs to the Maf family. YhdE subfamily. The cofactor is a divalent metal cation.

The protein resides in the cytoplasm. It catalyses the reaction dTTP + H2O = dTMP + diphosphate + H(+). The enzyme catalyses UTP + H2O = UMP + diphosphate + H(+). Functionally, nucleoside triphosphate pyrophosphatase that hydrolyzes dTTP and UTP. May have a dual role in cell division arrest and in preventing the incorporation of modified nucleotides into cellular nucleic acids. In Aliivibrio fischeri (strain ATCC 700601 / ES114) (Vibrio fischeri), this protein is dTTP/UTP pyrophosphatase.